Consider the following 83-residue polypeptide: MKASMFLALAGLVLLFVVGYASESEEKESPRELLSKIFAVDDFKGEERGCKGFGDSCTPGKNECCPNYACSSKHKWCKVYLGK.

Residues 1 to 21 form the signal peptide; the sequence is MKASMFLALAGLVLLFVVGYA. Positions 22 to 48 are excised as a propeptide; it reads SESEEKESPRELLSKIFAVDDFKGEER. Intrachain disulfides connect Cys-50–Cys-65, Cys-57–Cys-70, and Cys-64–Cys-77. Leu-81 carries the post-translational modification Leucine amide.

This sequence belongs to the neurotoxin 10 (Hwtx-1) family. 15 (Hntx-3) subfamily. In terms of assembly, monomer. Expressed by the venom gland.

It is found in the secreted. Functionally, selective antagonist of neuronal tetrodotoxin (TTX)-sensitive voltage-gated sodium channels (IC(50)=1270 nM on Nav1.1/SCN1A, 270 nM on Nav1.2/SCN2A, 491 nM on Nav1.3/SCN3A and 232 nM on Nav1.7/SCN9A). This toxin suppress Nav1.7 current amplitude without significantly altering the activation, inactivation, and repriming kinetics. Short extreme depolarizations partially activate the toxin-bound channel, indicating voltage-dependent inhibition of this toxin. This toxin increases the deactivation of the Nav1.7 current after extreme depolarizations. The toxin-Nav1.7 complex is gradually dissociated upon prolonged strong depolarizations in a voltage-dependent manner, and the unbound toxin rebinds to Nav1.7 after a long repolarization. Moreover, analysis of chimeric channels showed that the DIIS3-S4 linker is critical for toxin binding to Nav1.7. These data are consistent with this toxin interacting with Nav1.7 site 4 and trapping the domain II voltage sensor in the closed state. The protein is Hainantoxin-III 6 of Cyriopagopus hainanus (Chinese bird spider).